The chain runs to 336 residues: Phospho-N-acetylmuramoyl-pentapeptide-transferase (336 aa).

The next 10 membrane-spanning stretches (helical) occupy residues 3–23 (LSIM…PRFI), 52–72 (MGGT…SIIL), 79–99 (NLGA…IGFL), 123–143 (LIAG…SAIN), 144–164 (IFGF…FWVV), 175–195 (GIDG…GIIA), 201–221 (FDIL…FVFN), 227–247 (VFMG…ISIA), 255–275 (LFIG…VAYF), and 315–335 (VDAF…AILY).

Belongs to the glycosyltransferase 4 family. MraY subfamily. The cofactor is Mg(2+).

The protein localises to the cell membrane. The enzyme catalyses UDP-N-acetyl-alpha-D-muramoyl-L-alanyl-gamma-D-glutamyl-L-lysyl-D-alanyl-D-alanine + di-trans,octa-cis-undecaprenyl phosphate = Mur2Ac(oyl-L-Ala-gamma-D-Glu-L-Lys-D-Ala-D-Ala)-di-trans,octa-cis-undecaprenyl diphosphate + UMP. The protein operates within cell wall biogenesis; peptidoglycan biosynthesis. In terms of biological role, catalyzes the initial step of the lipid cycle reactions in the biosynthesis of the cell wall peptidoglycan: transfers peptidoglycan precursor phospho-MurNAc-pentapeptide from UDP-MurNAc-pentapeptide onto the lipid carrier undecaprenyl phosphate, yielding undecaprenyl-pyrophosphoryl-MurNAc-pentapeptide, known as lipid I. The chain is Phospho-N-acetylmuramoyl-pentapeptide-transferase from Streptococcus agalactiae serotype Ia (strain ATCC 27591 / A909 / CDC SS700).